Consider the following 460-residue polypeptide: Argininosuccinate lyase (460 aa).

Belongs to the lyase 1 family. Argininosuccinate lyase subfamily.

It is found in the cytoplasm. It carries out the reaction 2-(N(omega)-L-arginino)succinate = fumarate + L-arginine. It functions in the pathway amino-acid biosynthesis; L-arginine biosynthesis; L-arginine from L-ornithine and carbamoyl phosphate: step 3/3. The chain is Argininosuccinate lyase from Rhodopirellula baltica (strain DSM 10527 / NCIMB 13988 / SH1).